We begin with the raw amino-acid sequence, 705 residues long: Elongation factor G (705 aa).

Positions 8–290 constitute a tr-type G domain; that stretch reads HRYRNIGIMA…GVIHLLPSPA (283 aa). GTP is bound by residues 17–24, 88–92, and 142–145; these read AHIDAGKT, DTPGH, and NKMD.

It belongs to the TRAFAC class translation factor GTPase superfamily. Classic translation factor GTPase family. EF-G/EF-2 subfamily.

The protein localises to the cytoplasm. Catalyzes the GTP-dependent ribosomal translocation step during translation elongation. During this step, the ribosome changes from the pre-translocational (PRE) to the post-translocational (POST) state as the newly formed A-site-bound peptidyl-tRNA and P-site-bound deacylated tRNA move to the P and E sites, respectively. Catalyzes the coordinated movement of the two tRNA molecules, the mRNA and conformational changes in the ribosome. The protein is Elongation factor G of Xylella fastidiosa (strain M12).